We begin with the raw amino-acid sequence, 1488 residues long: MDVLELLRASVNGCYNTLFSDAWSQYVSKQIATTTYWYGALLAIGALFIAWFLYFKRLASLRLRDESARTLSALTAASGGDHRGLRFRKRDKMLFYGRRMLRKMKNVSGQMYSSGKGYKRRAVMRFARRILQLQRENRPLEMKTVEPPAEYLEETIDGSDRVPPDALYMLQSIRIFGHFEKPIFLKLCKHTQLLQLMAGDYLFKITDPDDSVYIVQSGMINVYICNADGSTLSLKTVRKGESVTSLLSFIDVLSGNSSYYKTVTAKAMEKSVVIRLPMQAFEEVFNENPDVMIRVIQVIMIRLQRVLFTALRNYLGLNAELVQNHMRIKGSNPVPVTVPGPVLSQASQASRAMASRPATSPVTRMSREEHTLSDPDPNPNASAMLFAEVHGDAPYIDLYHHQQQQSSGVSVGGTHRSSGACTPTGSGGESPDGTGNATITNIDQRLVQSSAVDSLRRELGLSEEDTSIIEPFVEVRELEPNVTLITEGNAEDVCIWFVMTGTLAVYQSNADATRAAKQDSKNDMLIHFVHPGEIVGGLAMLTGEASAYTIRARSNSRIAYIRRAAIYQIMRQRPRIVLDLGNGVVRRLSPLVRQCDYALDWIFLESGRAVYRQDESSDSTYIVLSGRMRSVITHPGGKKEIVGEYGKGDLVGIVEMITETSRTTTVLAVRDSELAKLPEGLFNAIKLRYPIVVTRLISFLSHRFLGSMQTRGANASSAPVEANPVTHKYSTVALVPITDDVPITPFTYELYHSLCAIGPVLRLTSEVVRKQLGNNIFEAANEYRLTSWLAQQEDRNIITLYQCDSALSPWTQRCMRQADVVLIVGLGERSHMVGKFEREIDKLAMRTQKELVLLYPETTNARPANTLSWLNARPWVTKHHHVLCVKRIFTRKSQYRINDLYSRVLLSEPNMHSDFSRLARWLTGNSIGLVLGGGGARGAAHIGMLKAIQEAGIPIDMVGGVSIGALMGALWCSERNITTVTQKAREWSKKMTKWFLQLLDLTYPITSMFSGREFNKTIHDTFGDVSIEDLWIPYFTLTTDITASCHRIHTNGSLWRYVRSSMSLSGYMPPLCDPQDGHLLLDGGYVNNLPGHLWRYCRASMSIAGVFPPFCDYRDGHLLLDGCYTNNVPADVMHNLGAAHIIAIDVGSQDDTDLTNYGDDLSGWWLLYKKWNPFTSPVKVPDLPDIQSRLAYVSCVRQLEEVKNSDYCEYIRPPIDKYKTLAFGSFDEIRDVGYVFGKNYFDNMAKAGRLGRFNQWFNKEPPKRGNHASLNEYTFIDLAQIVCKLPETYALNAVDIFSEDEDFDGYISEPTTLNMDRHRIQVPRAGNSLSFSETELDSDVEIDLELERKVDKSTQSTPPTPNKKHPSTPTSSQGNLMHLPLSMKAKDKMQILDKLEREHKRRQKSKHKRDRSMQRDSKATLHPAPMAEATTQTPSSDVDIDAKLDQLRKLQQELEQGNESEQEQEQEQEQEQGHIQEPENVTEADTKN.

The Lumenal portion of the chain corresponds to 1 to 34 (MDVLELLRASVNGCYNTLFSDAWSQYVSKQIATT). Residues 35–55 (TYWYGALLAIGALFIAWFLYF) traverse the membrane as a helical segment. Topologically, residues 56-1488 (KRLASLRLRD…ENVTEADTKN (1433 aa)) are cytoplasmic. Residue 175–302 (IFGHFEKPIF…IRVIQVIMIR (128 aa)) coordinates a nucleoside 3',5'-cyclic phosphate. Disordered stretches follow at residues 339–379 (PGPV…DPNP) and 402–440 (QQQQSSGVSVGGTHRSSGACTPTGSGGESPDGTGNATIT). 2 stretches are compositionally biased toward low complexity: residues 344-356 (SQASQASRAMASR) and 402-413 (QQQQSSGVSVGG). Polar residues predominate over residues 415–424 (HRSSGACTPT). A nucleoside 3',5'-cyclic phosphate contacts are provided by residues 458-587 (ELGL…VVRR) and 576-703 (IVLD…LSHR). The 167-residue stretch at 929–1095 (LVLGGGGARG…VNNLPGHLWR (167 aa)) folds into the PNPLA domain. A GXGXXG motif is present at residues 933-938 (GGGARG). The GXSXG signature appears at 960–964 (GVSIG). Ser-962 serves as the catalytic Nucleophile. The active-site Proton acceptor is the Asp-1082. The short motif at 1082 to 1084 (DGG) is the DGA/G element. Ser-1176 carries the phosphoserine modification. 2 disordered regions span residues 1348–1376 (RKVDKSTQSTPPTPNKKHPSTPTSSQGNL) and 1398–1488 (EHKR…DTKN). Basic residues predominate over residues 1399–1410 (HKRRQKSKHKRD). The span at 1440-1452 (IDAKLDQLRKLQQ) shows a compositional bias: basic and acidic residues. Residues 1456-1470 (QGNESEQEQEQEQEQ) are compositionally biased toward acidic residues.

The protein belongs to the NTE family. In terms of assembly, interacts with Pka-C3; interaction inhibits the catalytic function of Pka-C3 and the esterase activity of sws.

The protein resides in the endoplasmic reticulum membrane. It catalyses the reaction a 1-acyl-sn-glycero-3-phosphocholine + H2O = sn-glycerol 3-phosphocholine + a fatty acid + H(+). Phospholipase B that deacylates intracellular phosphatidylcholine (PtdCho), generating glycerophosphocholine (GroPtdCho). This deacylation occurs at both sn-2 and sn-1 positions of PtdCho. Its specific chemical modification by certain organophosphorus (OP) compounds leads to distal axonopathy. Plays a role in the signaling mechanism between neurons and glia that regulates glia wrapping during development of the adult brain. Essential for membrane lipid homeostasis and cell survival in both neurons and glia of the adult brain. This Drosophila mojavensis (Fruit fly) protein is Neuropathy target esterase sws.